Here is a 131-residue protein sequence, read N- to C-terminus: Arsenate reductase (131 aa).

Catalysis depends on nucleophile residues C10, C82, and C89. 2 cysteine pairs are disulfide-bonded: C10/C82 and C82/C89.

This sequence belongs to the low molecular weight phosphotyrosine protein phosphatase family. Thioredoxin-coupled ArsC subfamily.

The protein localises to the cytoplasm. The enzyme catalyses arsenate + [thioredoxin]-dithiol + H(+) = arsenite + [thioredoxin]-disulfide + H2O. Its function is as follows. Catalyzes the reduction of arsenate [As(V)] to arsenite [As(III)]. This Staphylococcus aureus (strain COL) protein is Arsenate reductase.